The chain runs to 316 residues: Probable cell division protein WhiA (316 aa).

Residues 275-309 constitute a DNA-binding region (H-T-H motif); the sequence is TLKELGEMVSSGKISKSGINHRLRKLDEIAEQLRS.

Belongs to the WhiA family.

Involved in cell division and chromosome segregation. In Bacillus licheniformis (strain ATCC 14580 / DSM 13 / JCM 2505 / CCUG 7422 / NBRC 12200 / NCIMB 9375 / NCTC 10341 / NRRL NRS-1264 / Gibson 46), this protein is Probable cell division protein WhiA.